Reading from the N-terminus, the 353-residue chain is Photosystem II protein D1 (353 aa).

Threonine 2 bears the N-acetylthreonine mark. Threonine 2 bears the Phosphothreonine mark. 3 helical membrane passes run 29-46 (YIGWFGVLMIPTLLTATS), 118-133 (HFLLGVACYMGREWEL), and 142-156 (WIAVAYSAPVAAATA). Chlorophyll a is bound at residue histidine 118. Pheophytin a is bound at residue tyrosine 126. 2 residues coordinate [CaMn4O5] cluster: aspartate 170 and glutamate 189. A helical transmembrane segment spans residues 197-218 (FHMLGVAGVFGGSLFSAMHGSL). Histidine 198 provides a ligand contact to chlorophyll a. A quinone contacts are provided by residues histidine 215 and 264-265 (SF). Fe cation is bound at residue histidine 215. Position 272 (histidine 272) interacts with Fe cation. A helical membrane pass occupies residues 274 to 288 (FLAAWPVVGIWFTAL). Residues histidine 332, glutamate 333, aspartate 342, and alanine 344 each coordinate [CaMn4O5] cluster. Positions 345 to 353 (ALEVPSLNG) are excised as a propeptide.

Belongs to the reaction center PufL/M/PsbA/D family. PSII is composed of 1 copy each of membrane proteins PsbA, PsbB, PsbC, PsbD, PsbE, PsbF, PsbH, PsbI, PsbJ, PsbK, PsbL, PsbM, PsbT, PsbX, PsbY, PsbZ, Psb30/Ycf12, at least 3 peripheral proteins of the oxygen-evolving complex and a large number of cofactors. It forms dimeric complexes. The D1/D2 heterodimer binds P680, chlorophylls that are the primary electron donor of PSII, and subsequent electron acceptors. It shares a non-heme iron and each subunit binds pheophytin, quinone, additional chlorophylls, carotenoids and lipids. D1 provides most of the ligands for the Mn4-Ca-O5 cluster of the oxygen-evolving complex (OEC). There is also a Cl(-1) ion associated with D1 and D2, which is required for oxygen evolution. The PSII complex binds additional chlorophylls, carotenoids and specific lipids. serves as cofactor. In terms of processing, tyr-161 forms a radical intermediate that is referred to as redox-active TyrZ, YZ or Y-Z. Post-translationally, C-terminally processed by CTPA; processing is essential to allow assembly of the oxygen-evolving complex and thus photosynthetic growth.

Its subcellular location is the plastid. The protein localises to the chloroplast thylakoid membrane. It carries out the reaction 2 a plastoquinone + 4 hnu + 2 H2O = 2 a plastoquinol + O2. Its function is as follows. Photosystem II (PSII) is a light-driven water:plastoquinone oxidoreductase that uses light energy to abstract electrons from H(2)O, generating O(2) and a proton gradient subsequently used for ATP formation. It consists of a core antenna complex that captures photons, and an electron transfer chain that converts photonic excitation into a charge separation. The D1/D2 (PsbA/PsbD) reaction center heterodimer binds P680, the primary electron donor of PSII as well as several subsequent electron acceptors. This is Photosystem II protein D1 from Oryza nivara (Indian wild rice).